Reading from the N-terminus, the 509-residue chain is ATP synthase subunit beta (509 aa).

The disordered stretch occupies residues 1–28 (MAKAATPKETAAAKKPAAPKKAASAKTA). Residue 187-194 (GGAGVGKT) coordinates ATP.

The protein belongs to the ATPase alpha/beta chains family. F-type ATPases have 2 components, CF(1) - the catalytic core - and CF(0) - the membrane proton channel. CF(1) has five subunits: alpha(3), beta(3), gamma(1), delta(1), epsilon(1). CF(0) has three main subunits: a(1), b(2) and c(9-12). The alpha and beta chains form an alternating ring which encloses part of the gamma chain. CF(1) is attached to CF(0) by a central stalk formed by the gamma and epsilon chains, while a peripheral stalk is formed by the delta and b chains.

The protein localises to the cell inner membrane. It carries out the reaction ATP + H2O + 4 H(+)(in) = ADP + phosphate + 5 H(+)(out). In terms of biological role, produces ATP from ADP in the presence of a proton gradient across the membrane. The catalytic sites are hosted primarily by the beta subunits. The polypeptide is ATP synthase subunit beta (Sinorhizobium medicae (strain WSM419) (Ensifer medicae)).